Reading from the N-terminus, the 774-residue chain is E3 ubiquitin-protein ligase RFWD3 (774 aa).

Disordered regions lie at residues G32 to A126 and P203 to E281. 2 positions are modified to phosphoserine; by ATM and ATR: S59 and S75. The segment covering L92–M103 has biased composition (acidic residues). The segment covering P108–N121 has biased composition (polar residues). Over residues S223–E242 the composition is skewed to acidic residues. The RING-type; degenerate zinc finger occupies C288 to N332. The stretch at R358–K403 forms a coiled coil. 3 WD repeats span residues I493–T535, Y536–D568, and K583–P628.

Interacts with MDM2 and p53/TP53. Binds to the RPA complex via direct interaction with RPA2. Interacts with RAD51. Post-translationally, phosphorylated at Ser-59 and Ser-75 upon DNA damage by ATM or ATR. ATM phosphorylation occurs at early times upon DNA damage, while ATR is the major kinase at later times. Phosphorylation by ATM and ATR is required to stabilize p53/TP53. Part of the phosphorylation depends upon RPA2 presence.

It is found in the nucleus. Its subcellular location is the PML body. The protein resides in the cytoplasm. The enzyme catalyses S-ubiquitinyl-[E2 ubiquitin-conjugating enzyme]-L-cysteine + [acceptor protein]-L-lysine = [E2 ubiquitin-conjugating enzyme]-L-cysteine + N(6)-ubiquitinyl-[acceptor protein]-L-lysine.. The protein operates within protein modification; protein ubiquitination. Its function is as follows. E3 ubiquitin-protein ligase required for the repair of DNA interstrand cross-links (ICL) in response to DNA damage. Plays a key role in RPA-mediated DNA damage signaling and repair. Acts by mediating ubiquitination of the RPA complex (RPA1, RPA2 and RPA3 subunits) and RAD51 at stalled replication forks, leading to remove them from DNA damage sites and promote homologous recombination. Also mediates the ubiquitination of p53/TP53 in the late response to DNA damage, and acts as a positive regulator of p53/TP53 stability, thereby regulating the G1/S DNA damage checkpoint. May act by catalyzing the formation of short polyubiquitin chains on p53/TP53 that are not targeted to the proteasome. In response to ionizing radiation, interacts with MDM2 and enhances p53/TP53 ubiquitination, possibly by restricting MDM2 from extending polyubiquitin chains on ubiquitinated p53/TP53. Required to translesion DNA synthesis across DNA-protein cross-link adducts by catalyzing ubiquitination of proteins on single-stranded DNA (ssDNA). The polypeptide is E3 ubiquitin-protein ligase RFWD3 (Rfwd3) (Mus musculus (Mouse)).